A 175-amino-acid polypeptide reads, in one-letter code: Avenin-like a7 (175 aa).

Positions 1–19 are cleaved as a signal peptide; sequence MKTMFILALLAFTATSAVA.

Belongs to the prolamin family. In terms of processing, contains 7 disulfide bonds.

In terms of biological role, seed storage protein. Not integrated in the gluten polymer through disulfide bonds, unless incorporated by reduction and reoxidation during dough making. Increases dough strength and bread volume, but decreases dough stability when added into a base wheat flour. The polypeptide is Avenin-like a7 (Triticum aestivum (Wheat)).